Here is a 322-residue protein sequence, read N- to C-terminus: tRNA-modifying protein YgfZ (322 aa).

Trp182 is a folate binding site.

This sequence belongs to the tRNA-modifying YgfZ family.

It is found in the cytoplasm. In terms of biological role, folate-binding protein involved in regulating the level of ATP-DnaA and in the modification of some tRNAs. It is probably a key factor in regulatory networks that act via tRNA modification, such as initiation of chromosomal replication. In Vibrio parahaemolyticus serotype O3:K6 (strain RIMD 2210633), this protein is tRNA-modifying protein YgfZ.